We begin with the raw amino-acid sequence, 186 residues long: Ran guanine nucleotide release factor (186 aa).

An interaction with RAN region spans residues 27-70; sequence DLRPVPDNQEVFCHPVTDQSLIVELLELQAHVRGEAAARYHFED.

The protein belongs to the MOG1 family. Monomer. Interacts with RAN, both RAN-GTP and RAN-GDP. Competes with RCC1 for a common binding site on RAN and thereby inhibits RCC1-mediated nucleotide exchange. Forms a complex with RAN-GTP and RANBP1. Interacts with the cytoplasmic loop 2 of SCN5A. Isoform 1 and isoform 2 are ubiquitously expressed. Detected in heart and brain.

Its subcellular location is the nucleus. The protein localises to the cytoplasm. It is found in the perinuclear region. It localises to the cell membrane. Functionally, may regulate the intracellular trafficking of RAN. Promotes guanine nucleotide release from RAN and inhibits binding of new GTP by preventing the binding of the RAN guanine nucleotide exchange factor RCC1. Regulates the levels of GTP-bound RAN in the nucleus, and thereby plays a role in the regulation of RAN-dependent mitotic spindle dynamics. Enhances the expression of SCN5A at the cell membrane in cardiomyocytes. The chain is Ran guanine nucleotide release factor (RANGRF) from Homo sapiens (Human).